The chain runs to 94 residues: MNDQRDQAVPWATGLAVAGFVAAVIAVAVVVLSLGLIRVHPLLAVGLNIVAVSGLAPTLWGWRRTPVLRWFVLGAAVGVAGAWLALLALTLGDG.

Positions 1–26 are cleaved as a signal peptide; it reads MNDQRDQAVPWATGLAVAGFVAAVIA. The next 2 membrane-spanning stretches (helical) occupy residues 42-62 and 71-91; these read LLAVGLNIVAVSGLAPTLWGW and FVLGAAVGVAGAWLALLALTL.

The protein localises to the cell membrane. This is an uncharacterized protein from Mycobacterium tuberculosis (strain CDC 1551 / Oshkosh).